A 398-amino-acid polypeptide reads, in one-letter code: Phospholipase C (398 aa).

Residues 1–28 (MKRKICKALICATLATSLWAGASTKVYA) form the signal peptide. The Zn(2+) site is built by Trp29, His39, Asp84, His96, His154, Asp158, His164, His176, and Glu180. Residues 29–278 (WDGKIDGTGT…HDVSEGNDPS (250 aa)) form the Zn-dependent PLC domain. The linker stretch occupies residues 275-283 (NDPSVGKNV). One can recognise a PLAT domain in the interval 284–398 (KELVAYISTS…ISGNSTYNIK (115 aa)). Ca(2+)-binding residues include Asp297, Gly299, Thr300, Asp301, Asp321, Asn322, Gly324, Asn325, Asp326, Asp364, and Ala365.

This sequence belongs to the bacterial zinc-metallophospholipase C family. Requires Ca(2+) as cofactor. The cofactor is Zn(2+).

The protein resides in the secreted. The catalysed reaction is a 1,2-diacyl-sn-glycero-3-phosphocholine + H2O = phosphocholine + a 1,2-diacyl-sn-glycerol + H(+). Bacterial hemolysins are exotoxins that attack blood cell membranes and cause cell rupture. Constitutes an essential virulence factor in gas gangrene. Binds to eukaryotic membranes where it hydrolyzes both phosphatidylcholine and sphingomyelin. The diacylglycerol produced can activate both the arachidonic acid pathway, leading to modulation of the inflammatory response cascade and thrombosis, and protein kinase C, leading to activation of eukaryotic phospholipases and further membrane damage. Acts on human and mouse erythrocytes, but not on rabbit or horse erythrocytes. The polypeptide is Phospholipase C (plc) (Clostridium perfringens (strain 13 / Type A)).